An 840-amino-acid polypeptide reads, in one-letter code: Probable alpha-glucuronidase A (840 aa).

The N-terminal stretch at 1–19 (MWSGIPIFALLSSIGIAAA) is a signal peptide. Residues N50, N149, N222, N262, N279, N310, N465, N527, N576, N610, N682, N723, and N732 are each glycosylated (N-linked (GlcNAc...) asparagine).

Belongs to the glycosyl hydrolase 67 family.

It localises to the secreted. The enzyme catalyses an alpha-D-glucuronoside + H2O = D-glucuronate + an alcohol. Alpha-glucuronidase involved in the hydrolysis of xylan, a major structural heterogeneous polysaccharide found in plant biomass representing the second most abundant polysaccharide in the biosphere, after cellulose. Releases 4-O-methylglucuronic acid from xylan. This is Probable alpha-glucuronidase A (aguA) from Aspergillus fumigatus (strain CBS 144.89 / FGSC A1163 / CEA10) (Neosartorya fumigata).